A 440-amino-acid chain; its full sequence is Transposon Ty1-NL2 Gag polyprotein (440 aa).

4 stretches are compositionally biased toward polar residues: residues 1–23, 48–60, 71–97, and 129–152; these read MESQQLSQHSPISHGSACASVTS, TKANSQQTTTPAS, SPQTAQSHSPQNGPYPQQCMMTQNQAN, and QFPQYPSSVGTPLSTPSPESGNTF. Disordered stretches follow at residues 1–97, 129–171, and 352–440; these read MESQ…NQAN, QFPQ…YVRP, and GSRN…PETY. Low complexity predominate over residues 153–165; sequence TDSSSADSDMTST. The RNA-binding stretch occupies residues 299–401; sequence NNGIHINNKV…NSKSKTARAH (103 aa). Over residues 402–418 the composition is skewed to low complexity; that stretch reads NVSTSNNSPSTDNDSIS. S416 is modified (phosphoserine). Residues 419–428 are compositionally biased toward polar residues; sequence KSTTEPIQLN. Positions 429-440 are enriched in basic and acidic residues; sequence NKHDLHLRPETY.

As to quaternary structure, homotrimer.

It is found in the cytoplasm. Capsid protein (CA) is the structural component of the virus-like particle (VLP), forming the shell that encapsulates the retrotransposons dimeric RNA genome. The particles are assembled from trimer-clustered units and there are holes in the capsid shells that allow for the diffusion of macromolecules. CA also has nucleocapsid-like chaperone activity, promoting primer tRNA(i)-Met annealing to the multipartite primer-binding site (PBS), dimerization of Ty1 RNA and initiation of reverse transcription. The chain is Transposon Ty1-NL2 Gag polyprotein (TY1A-NL2) from Saccharomyces cerevisiae (strain ATCC 204508 / S288c) (Baker's yeast).